Reading from the N-terminus, the 483-residue chain is Iron-sulfur cluster assembly SufBD family protein ycf24 (483 aa).

It belongs to the iron-sulfur cluster assembly SufBD family.

Its subcellular location is the plastid. The protein localises to the chloroplast. This chain is Iron-sulfur cluster assembly SufBD family protein ycf24 (ycf24), found in Guillardia theta (Cryptophyte).